We begin with the raw amino-acid sequence, 165 residues long: Secreted acidic protein 2 (165 aa).

Composition is skewed to acidic residues over residues 1–58 (WSXS…DDSG) and 80–102 (ESSD…DAYN). The interval 1–112 (WSXSGDDDDD…DDSQAGELNS (112 aa)) is disordered. Polar residues predominate over residues 103 to 112 (DDSQAGELNS).

Component of the acid-insoluble and acid-soluble organic matrix of the aragonitic skeleton (at protein level).

It is found in the secreted. The sequence is that of Secreted acidic protein 2 from Acropora millepora (Staghorn coral).